The sequence spans 39 residues: Photosystem II reaction center protein Y (39 aa).

Residues 7–25 traverse the membrane as a helical segment; sequence LLIVLLPILAAAGWAVFNI.

It belongs to the PsbY family. In terms of assembly, PSII is composed of 1 copy each of membrane proteins PsbA, PsbB, PsbC, PsbD, PsbE, PsbF, PsbH, PsbI, PsbJ, PsbK, PsbL, PsbM, PsbT, PsbX, PsbY, PsbZ, Psb30/Ycf12, peripheral proteins PsbO, CyanoQ (PsbQ), PsbU, PsbV and a large number of cofactors. It forms dimeric complexes.

It localises to the cellular thylakoid membrane. Loosely associated component of the core of photosystem II (PSII), it is not always seen in crystals. PSII is a light-driven water plastoquinone oxidoreductase, using light energy to abstract electrons from H(2)O, generating a proton gradient subsequently used for ATP formation. The chain is Photosystem II reaction center protein Y from Trichodesmium erythraeum (strain IMS101).